A 261-amino-acid chain; its full sequence is Pimeloyl-[acyl-carrier protein] methyl ester esterase (261 aa).

Residues 16–241 (LVLLHGWGLN…HAAHAPFISH (226 aa)) form the AB hydrolase-1 domain. Substrate contacts are provided by residues W22, 82-83 (SL), and 143-147 (FLALQ). Residue S82 is the Nucleophile of the active site. Catalysis depends on residues D207 and H235. H235 lines the substrate pocket.

It belongs to the AB hydrolase superfamily. Carboxylesterase BioH family. As to quaternary structure, monomer.

The protein localises to the cytoplasm. It carries out the reaction 6-carboxyhexanoyl-[ACP] methyl ester + H2O = 6-carboxyhexanoyl-[ACP] + methanol + H(+). The protein operates within cofactor biosynthesis; biotin biosynthesis. In terms of biological role, the physiological role of BioH is to remove the methyl group introduced by BioC when the pimeloyl moiety is complete. It allows to synthesize pimeloyl-ACP via the fatty acid synthetic pathway through the hydrolysis of the ester bonds of pimeloyl-ACP esters. In Photorhabdus laumondii subsp. laumondii (strain DSM 15139 / CIP 105565 / TT01) (Photorhabdus luminescens subsp. laumondii), this protein is Pimeloyl-[acyl-carrier protein] methyl ester esterase.